The following is a 427-amino-acid chain: Lupus La protein homolog B (427 aa).

One can recognise an HTH La-type RNA-binding domain in the interval 6–98; that stretch reads DKEQLDLDTK…RRSPAKPLPE (93 aa). Residues 110–202 form the RRM domain; the sequence is RSVYIKGFPT…EERKLNKSEE (93 aa). Disordered regions lie at residues 193-220 and 319-427; these read EERKLNKSEEKAKSKQEKEEAQKQAEDA and EGKQ…VGDQ. The xRRM domain occupies 226-348; the sequence is EERVGCLLKF…KGRGGKGNDS (123 aa). The Nuclear localization signal motif lies at 315–331; it reads KKIMEGKQESFNKRKGR. Basic residues-rich tracts occupy residues 327–342 and 351–360; these read KRKGRDGRKFKGKGRG and RKKIQFQGKK. Residues 365–376 are compositionally biased toward acidic residues; it reads SSDDEDDMEESE. Over residues 405 to 427 the composition is skewed to basic and acidic residues; the sequence is RALDDKAEDGPAVKQSKTEVGDQ.

Post-translationally, phosphorylated.

The protein resides in the nucleus. In terms of biological role, la protein plays a role in the transcription of RNA polymerase III. It is most probably a transcription termination factor. Binds to the 3' termini of virtually all nascent polymerase III transcripts. In Xenopus laevis (African clawed frog), this protein is Lupus La protein homolog B (ssb-b).